Reading from the N-terminus, the 637-residue chain is Early transcription factor 70 kDa subunit (637 aa).

Residues 32–185 (RTIIDENRSV…GHIIDLMSEE (154 aa)) enclose the Helicase ATP-binding domain. 45–52 (HIMGSGKT) provides a ligand contact to ATP. The DEXH box signature appears at 135–138 (DEAH). One can recognise a Helicase C-terminal domain in the interval 327-507 (KFKYFINRIQ…VLPFDIKKLL (181 aa)).

This sequence belongs to the helicase family. VETF subfamily. In terms of assembly, heterodimer of a 70 kDa and a 82 kDa subunit. Part of the early transcription complex composed of ETF, RAP94/OPG109, and the DNA-directed RNA polymerase.

The protein localises to the virion. Functionally, acts with RNA polymerase to initiate transcription from early gene promoters. Is recruited by the RPO-associated protein of 94 kDa RAP94/OPG109 to form the early transcription complex, which also contains the core RNA polymerase. ETF heterodimer binds to early gene promoters. The protein is Early transcription factor 70 kDa subunit (OPG118) of Homo sapiens (Human).